An 824-amino-acid polypeptide reads, in one-letter code: Dapper 1-B (824 aa).

3 disordered regions span residues 1 to 33 (MKPI…RQRT), 131 to 150 (EEHL…LSDG), and 515 to 534 (HASS…EGSS). The interaction with tcf7l1-A stretch occupies residues 2–343 (KPIPAAPEPL…PVRTNKPRTS (342 aa)). Over residues 16–33 (DSPRRKDKGEAESERQRT) the composition is skewed to basic and acidic residues. The stretch at 84-139 (EEKFLEDNILLLKKQLNCLRKRDAGLLSQLHELDKQINDLRIDVEKTEEHLETDSR) forms a coiled coil. A compositionally biased stretch (basic and acidic residues) spans 520 to 530 (FDERPPLDFKS). The PDZ-binding signature appears at 821-824 (MTTV).

It belongs to the dapper family. As to quaternary structure, interacts with dbf4 and tcf7l1-A. Interacts with dvl2/dsh; the interaction is required for dact1-b phosphorylation by CaMK1D and seems to become disrupted by the phosphorylation. Post-translationally, phosphorylated by CaMK1D; the phosphorylation requires binding to dvl2/dsh. In terms of tissue distribution, expressed both in the dorsal lip in early gastrula and throughout the posterior presumptive ectoderm in early neurula. Expressed in the dorsal neural folds at the tailbud stage and highly expressed in the tadpole head, including the brain, retina and cartilaginous branchial arch derivatives.

It localises to the cytoplasm. The protein resides in the nucleus. Involved in regulation of intracellular signaling pathways during development. Specifically thought to play a role in canonical and/or non-canonical Wnt signaling pathways through interaction with DSH (Dishevelled) family proteins. Binds to dvl2 to regulate the degradation of beta-catenin (ctnnb1-A and possibly ctnnb1-B), thereby modulating the transcriptional activation of target genes of the Wnt signaling pathway. Seems to promote beta-catenin degradation if not phosphorylated and to block beta-catenin degradation if phosphorylated by CaMK1D. Involved in regulation of catenin delta/ctnnd1 protein level. May also bind to and directly stimulate the activity of tcf7l1-A. Also regulates the activation by dvl2 of jnk, a component of ctnnb1/beta-catenin-independent frizzled signaling. Required for notochord and head formation. The chain is Dapper 1-B (dact1-b) from Xenopus laevis (African clawed frog).